The following is a 211-amino-acid chain: Type II secretion system protein J (211 aa).

Residues 1 to 7 constitute a propeptide, leader sequence; that stretch reads MRPRAAG. Phenylalanine 8 is modified (N-methylphenylalanine). A helical membrane pass occupies residues 8 to 28; that stretch reads FTLIEVLLATMLLVGGLALAF.

This sequence belongs to the GSP J family.

The protein localises to the membrane. Functionally, involved in a type II secretion system (T2SS, formerly general secretion pathway, GSP) for the export of proteins. This is Type II secretion system protein J (xpsJ) from Xanthomonas campestris pv. campestris (strain ATCC 33913 / DSM 3586 / NCPPB 528 / LMG 568 / P 25).